Reading from the N-terminus, the 239-residue chain is ATP synthase subunit a (239 aa).

6 consecutive transmembrane segments (helical) span residues 31 to 51, 91 to 111, 125 to 145, 151 to 171, 194 to 214, and 215 to 235; these read FLLQ…LGLG, VFPL…LGMI, AACA…FHGV, FMGP…IGHI, ILFF…LGLF, and TGFI…AGAI.

It belongs to the ATPase A chain family. In terms of assembly, F-type ATPases have 2 components, CF(1) - the catalytic core - and CF(0) - the membrane proton channel. CF(1) has five subunits: alpha(3), beta(3), gamma(1), delta(1), epsilon(1). CF(0) has three main subunits: a(1), b(2) and c(9-12). The alpha and beta chains form an alternating ring which encloses part of the gamma chain. CF(1) is attached to CF(0) by a central stalk formed by the gamma and epsilon chains, while a peripheral stalk is formed by the delta and b chains.

Its subcellular location is the cell inner membrane. Functionally, key component of the proton channel; it plays a direct role in the translocation of protons across the membrane. The protein is ATP synthase subunit a of Syntrophobacter fumaroxidans (strain DSM 10017 / MPOB).